We begin with the raw amino-acid sequence, 233 residues long: Homeobox protein EMX1 (233 aa).

The homeobox DNA-binding region spans 135–194 (PKRIRTAFSPSQLLRLERAFEKNHYVVGAERKQLASSLSLSETQVKVWFQNRRTKYKRQK). Positions 192–233 (RQKLEEEGPDSDQKKKGSHHINRWRLATKQPNGEDIDVTSND) are disordered. The span at 193-206 (QKLEEEGPDSDQKK) shows a compositional bias: basic and acidic residues.

The protein belongs to the EMX homeobox family.

The protein localises to the nucleus. In terms of biological role, may function in combinations with OTX1/2 to specify cell fates in the developing central nervous system. This chain is Homeobox protein EMX1 (emx1), found in Xenopus tropicalis (Western clawed frog).